The chain runs to 1561 residues: Rho GTPase-activating protein 190 (1561 aa).

FF domains lie at 252–320 (YQES…HMKK), 365–419 (YLQN…YLNS), 426–480 (KIGW…HQDD), and 482–547 (IEKS…HLRF). The pG1 pseudoGTPase domain maps to 592-765 (SGSDRTLNLL…EPYPSNHTDL (174 aa)). Residues 766–926 (RILCCIFCGD…LKTAWDNKYE (161 aa)) enclose the pG2 pseudoGTPase domain. A phosphoserine mark is found at Ser-973, Ser-975, Ser-985, Ser-988, and Ser-996. The tract at residues 1054-1074 (KIRPKGPSQTLKVGEAPSRNC) is disordered. Positions 1349–1552 (AQFGKLMITS…TMIDQFPYLF (204 aa)) constitute a Rho-GAP domain.

Negatively regulated by integrin, bsk and Src/Src64B. In terms of biological role, GTPase-activating protein (GAP) for RhoA/Rho1 that plays an essential role in the stability of dorsal branches of mushroom body (MB) neurons. The MB neurons are the center for olfactory learning and memory. Acts by converting RhoA/Rho1 to an inactive GDP-bound state, leading to repress the RhoA/Rho1-Drok-MRLC signaling pathway thereby maintaining axon branch stability. This chain is Rho GTPase-activating protein 190 (RhoGAPp190), found in Drosophila melanogaster (Fruit fly).